The chain runs to 140 residues: Large ribosomal subunit protein uL11 (140 aa).

It belongs to the universal ribosomal protein uL11 family. As to quaternary structure, part of the ribosomal stalk of the 50S ribosomal subunit. Interacts with L10 and the large rRNA to form the base of the stalk. L10 forms an elongated spine to which L12 dimers bind in a sequential fashion forming a multimeric L10(L12)X complex. One or more lysine residues are methylated.

Its function is as follows. Forms part of the ribosomal stalk which helps the ribosome interact with GTP-bound translation factors. The protein is Large ribosomal subunit protein uL11 of Halothermothrix orenii (strain H 168 / OCM 544 / DSM 9562).